We begin with the raw amino-acid sequence, 295 residues long: MANLKDIQRQIKSVSNTQKTTRAMKLVSTAKLRRAEELAKRSRLYAAKMNQVIAEIAGRIRCNKVGGIDNRCFSKIEDPKTVDIIFVTADKGLCGGFNIQTIKAVKKLLSEYKAKNVKVRLRGIGKKGVEFFKYNEVELFDSVSNLSSKPDKEKSDEFILSSIEDFKDGKIDALYLVYNGYKNMITQELHVSKIFPVDATLYECDEPEKSMLEVEAQDEEKMLDSLVNRYAQYAMYYSLIDSVAAEHSARMQAMDTATNNAKEMVKSLNVQFNKARQAAITTELIEIISGVESMK.

This sequence belongs to the ATPase gamma chain family. As to quaternary structure, F-type ATPases have 2 components, CF(1) - the catalytic core - and CF(0) - the membrane proton channel. CF(1) has five subunits: alpha(3), beta(3), gamma(1), delta(1), epsilon(1). CF(0) has three main subunits: a, b and c.

The protein localises to the cell inner membrane. Produces ATP from ADP in the presence of a proton gradient across the membrane. The gamma chain is believed to be important in regulating ATPase activity and the flow of protons through the CF(0) complex. The chain is ATP synthase gamma chain from Sulfurimonas denitrificans (strain ATCC 33889 / DSM 1251) (Thiomicrospira denitrificans (strain ATCC 33889 / DSM 1251)).